Here is a 130-residue protein sequence, read N- to C-terminus: Iron-sulfur cluster insertion protein ErpA (130 aa).

Residues Cys46, Cys116, and Cys118 each contribute to the iron-sulfur cluster site.

Belongs to the HesB/IscA family. Homodimer. The cofactor is iron-sulfur cluster.

Its function is as follows. Required for insertion of 4Fe-4S clusters for at least IspG. This chain is Iron-sulfur cluster insertion protein ErpA, found in Legionella pneumophila (strain Lens).